The following is a 276-amino-acid chain: CTD small phosphatase-like protein (276 aa).

The disordered stretch occupies residues 1–31 (MDGPAIITQVTNPKEDEARSPVAGEKASQRN). The FCP1 homology domain maps to 102-260 (LDYGKKCVVI…LDLIPFFEGL (159 aa)). The 4-aspartylphosphate intermediate role is filled by aspartate 112. Mg(2+)-binding residues include aspartate 112, aspartate 114, and asparagine 223. The active-site Proton donor is aspartate 114.

As to quaternary structure, monomer. Interacts with REST. Mg(2+) serves as cofactor.

Its subcellular location is the nucleus. It carries out the reaction O-phospho-L-seryl-[protein] + H2O = L-seryl-[protein] + phosphate. It catalyses the reaction O-phospho-L-threonyl-[protein] + H2O = L-threonyl-[protein] + phosphate. Functionally, preferentially catalyzes the dephosphorylation of 'Ser-5' within the tandem 7 residue repeats in the C-terminal domain (CTD) of the largest RNA polymerase II subunit POLR2A. Negatively regulates RNA polymerase II transcription, possibly by controlling the transition from initiation/capping to processive transcript elongation. Recruited by REST to neuronal genes that contain RE-1 elements, leading to neuronal gene silencing in non-neuronal cells. This Mus musculus (Mouse) protein is CTD small phosphatase-like protein (Ctdspl).